The primary structure comprises 543 residues: MAKFVFVTGGVVSSIGKGIVAASLGRLLKSRGYSVSILKLDPYLNVDPGTMSPYQHGEVFVTEDGAETDLDLGHYERFTDTAMSRLNSVTTGSIYQSVINKERRGDYNGGTVQVIPHITGEIRERIHRVASNSNADVVITEIGGTVGDIESLPFLEAIREFRGDVGRHDLAYIHVTLLPYIGTSGELKTKPTQHSVKELRSIGIQPDVLVCRSDREINAELKRKIGGFCGVHERAVIPSLDADSIYAVPQTLEEQGLCREVLDVLNLTDHDSDMRAWQQLVHKMRNPGPAVKVALVGKYVQLNDAYLSVVEALRHACLAQDASLDLHWVCAEEIENRGADALLHGMDAVVVPGGFGNRGVDGKVAAIRWAREQRIPFLGLCLGMQCAVIEWARNLAGLTDATSAELEPGTSHPVIHLLPEQQDVVDLGGTMRLGVYPCRIAEGSMADRLYGDEVVYERHRHRYEFNNAYRNLFLESGYRISGSSPDGRLVELIELPEHPFFTACQYHPEFLSRPGQPHPLFRGLIEAAQQRLPNSPSEIKATA.

Positions 1 to 267 (MAKFVFVTGG…CREVLDVLNL (267 aa)) are amidoligase domain. CTP is bound at residue S13. S13 is a binding site for UTP. Position 14-19 (14-19 (SIGKGI)) interacts with ATP. Residue Y54 participates in L-glutamine binding. An ATP-binding site is contributed by D71. Residues D71 and E141 each contribute to the Mg(2+) site. Residues 148–150 (DIE), 188–193 (KTKPTQ), and K224 each bind CTP. UTP contacts are provided by residues 188–193 (KTKPTQ) and K224. Residues 292 to 534 (KVALVGKYVQ…IEAAQQRLPN (243 aa)) form the Glutamine amidotransferase type-1 domain. G354 contributes to the L-glutamine binding site. C381 functions as the Nucleophile; for glutamine hydrolysis in the catalytic mechanism. Residues 382-385 (LGMQ), E405, and R462 each bind L-glutamine. Active-site residues include H507 and E509.

The protein belongs to the CTP synthase family. Homotetramer.

The enzyme catalyses UTP + L-glutamine + ATP + H2O = CTP + L-glutamate + ADP + phosphate + 2 H(+). The catalysed reaction is L-glutamine + H2O = L-glutamate + NH4(+). It carries out the reaction UTP + NH4(+) + ATP = CTP + ADP + phosphate + 2 H(+). The protein operates within pyrimidine metabolism; CTP biosynthesis via de novo pathway; CTP from UDP: step 2/2. Allosterically activated by GTP, when glutamine is the substrate; GTP has no effect on the reaction when ammonia is the substrate. The allosteric effector GTP functions by stabilizing the protein conformation that binds the tetrahedral intermediate(s) formed during glutamine hydrolysis. Inhibited by the product CTP, via allosteric rather than competitive inhibition. In terms of biological role, catalyzes the ATP-dependent amination of UTP to CTP with either L-glutamine or ammonia as the source of nitrogen. Regulates intracellular CTP levels through interactions with the four ribonucleotide triphosphates. The chain is CTP synthase from Synechococcus sp. (strain WH7803).